The sequence spans 132 residues: Small ribosomal subunit protein uS11 (132 aa).

This sequence belongs to the universal ribosomal protein uS11 family. In terms of assembly, part of the 30S ribosomal subunit. Interacts with proteins S7 and S18. Binds to IF-3.

Located on the platform of the 30S subunit, it bridges several disparate RNA helices of the 16S rRNA. Forms part of the Shine-Dalgarno cleft in the 70S ribosome. The sequence is that of Small ribosomal subunit protein uS11 from Oenococcus oeni (strain ATCC BAA-331 / PSU-1).